Here is a 222-residue protein sequence, read N- to C-terminus: Charged multivesicular body protein 4b (222 aa).

Disordered stretches follow at residues 1 to 21 and 183 to 222; these read MSLI…PSPQ and GPET…WATA. The stretch at 21-182 forms a coiled coil; sequence QEAIQKLRDT…ELDKNLLEVQ (162 aa). Low complexity predominate over residues 188–200; the sequence is PLPNVPAAVLPAK.

The protein belongs to the SNF7 family. Probable core component of the endosomal sorting required for transport complex III (ESCRT-III). ESCRT-III components are thought to multimerize to form a flat lattice on the perimeter membrane of the endosome.

It is found in the cytoplasm. Its subcellular location is the cytosol. It localises to the late endosome membrane. The protein localises to the midbody. Its function is as follows. Probable core component of the endosomal sorting required for transport complex III (ESCRT-III) which is involved in multivesicular bodies (MVBs) formation and sorting of endosomal cargo proteins into MVBs. MVBs contain intraluminal vesicles (ILVs) that are generated by invagination and scission from the limiting membrane of the endosome and mostly are delivered to lysosomes enabling degradation of membrane proteins, such as stimulated growth factor receptors, lysosomal enzymes and lipids. In Xenopus tropicalis (Western clawed frog), this protein is Charged multivesicular body protein 4b (chmp4b).